Reading from the N-terminus, the 495-residue chain is Type-1 histone deacetylase 1 (495 aa).

D94 is a substrate binding site. H136 acts as the Proton acceptor in catalysis. Substrate is bound at residue G144. Positions 171, 173, and 259 each coordinate a divalent metal cation. A substrate-binding site is contributed by Y298. Residues P372–G495 are disordered. Positions D396–E413 are enriched in basic and acidic residues. Over residues N425–I443 the composition is skewed to polar residues. The segment covering N454–N480 has biased composition (low complexity).

The protein belongs to the histone deacetylase family. HD type 1 subfamily.

It localises to the nucleus. The protein localises to the cytoplasm. The enzyme catalyses N(6)-acetyl-L-lysyl-[histone] + H2O = L-lysyl-[histone] + acetate. Responsible for the deacetylation of lysine residues on the N-terminal part of the core histones (H2A, H2B, H3 and H4). Histone deacetylation plays an important role in transcriptional regulation, cell cycle progression and developmental events. Histone deacetylases act via the formation of large multiprotein complexes. The chain is Type-1 histone deacetylase 1 (hdaA) from Dictyostelium discoideum (Social amoeba).